The sequence spans 1607 residues: Phosphatidylinositol 3-kinase piki-1 (1607 aa).

Positions 2–21 (SDDEELQLAIEISKKTFKDE) constitute a UIM domain. Disordered stretches follow at residues 54–91 (EANS…HSQS), 105–128 (STSQ…KFPP), and 142–182 (PPPP…SFAS). The segment covering 58–69 (PGPSSYSGSLAT) has biased composition (polar residues). Residues 158–169 (PPVPIHPTPPVS) show a composition bias toward pro residues. The 92-residue stretch at 362-453 (ASTVKVVVYK…GDDVKLDLGV (92 aa)) folds into the PI3K-RBD domain. The region spanning 598-766 (KMDFLQIMLN…KIWDTEIYFP (169 aa)) is the C2 PI3K-type domain. One can recognise a PIK helical domain in the interval 776–953 (PQDFATLDIE…AIRCQNLQQK (178 aa)). The PI3K/PI4K catalytic domain occupies 1029–1303 (RIEECSVFNS…MIQNSLGSAF (275 aa)). Positions 1035–1041 (VFNSNAK) are G-loop. The interval 1168-1176 (GIGDRHNDN) is catalytic loop. The activation loop stretch occupies residues 1187-1213 (HIDFGKYMGDWQMAAGFRRDRVPFVFT). The region spanning 1344-1458 (GRISRVTVLK…TFFHSILRDN (115 aa)) is the PX domain. In terms of domain architecture, C2 spans 1472-1601 (SQCQIYLKIE…KNCRTLEGWF (130 aa)).

It belongs to the PI3/PI4-kinase family.

It is found in the cell projection. Its subcellular location is the phagocytic cup. The protein resides in the cytoplasmic vesicle. It localises to the phagosome membrane. The protein localises to the cytoplasm. The enzyme catalyses a 1,2-diacyl-sn-glycero-3-phospho-(1D-myo-inositol) + ATP = a 1,2-diacyl-sn-glycero-3-phospho-(1D-myo-inositol-3-phosphate) + ADP + H(+). Functionally, phosphatidylinositol 3-kinase involved in clearance of apoptotic cell corpses by phagosomes. Phagosome maturation requires two sequential and non-overlapping pulses of phosphatidylinositol-3-phosphate (PI3P) on the vesicle surface which mediates recruitment of sortins snx-1 and lst-4 and small GTPases rab-5, rab-2 and rab-7. The first pulse is initiated by piki-1, then maintained by vps-34 which also produces the second pulse. Unlike vps-34, not involved in the formation of PI3P in early endosomes. The polypeptide is Phosphatidylinositol 3-kinase piki-1 (Caenorhabditis elegans).